A 1141-amino-acid polypeptide reads, in one-letter code: DNA polymerase II large subunit (1141 aa).

The tract at residues 567-587 is disordered; the sequence is AGTRVGGRMGRPGKSAPRKMK.

Belongs to the archaeal DNA polymerase II family. In terms of assembly, heterodimer of a large subunit and a small subunit.

It catalyses the reaction DNA(n) + a 2'-deoxyribonucleoside 5'-triphosphate = DNA(n+1) + diphosphate. The catalysed reaction is Exonucleolytic cleavage in the 3'- to 5'-direction to yield nucleoside 5'-phosphates.. Functionally, possesses two activities: a DNA synthesis (polymerase) and an exonucleolytic activity that degrades single-stranded DNA in the 3'- to 5'-direction. Has a template-primer preference which is characteristic of a replicative DNA polymerase. This chain is DNA polymerase II large subunit, found in Methanocorpusculum labreanum (strain ATCC 43576 / DSM 4855 / Z).